Here is a 182-residue protein sequence, read N- to C-terminus: UPF0397 protein BCAH187_A2708 (182 aa).

A run of 5 helical transmembrane segments spans residues 9–29 (VVAI…GFSI), 40–60 (AILT…IGLI), 71–91 (WGIW…MGFI), 114–134 (ITGL…DIIV), and 142–162 (IVIQ…VLGL).

This sequence belongs to the UPF0397 family.

It is found in the cell membrane. The polypeptide is UPF0397 protein BCAH187_A2708 (Bacillus cereus (strain AH187)).